Here is an 85-residue protein sequence, read N- to C-terminus: Small ribosomal subunit protein uS17 (85 aa).

The protein belongs to the universal ribosomal protein uS17 family. Part of the 30S ribosomal subunit.

One of the primary rRNA binding proteins, it binds specifically to the 5'-end of 16S ribosomal RNA. This Mycoplasma genitalium (strain ATCC 33530 / DSM 19775 / NCTC 10195 / G37) (Mycoplasmoides genitalium) protein is Small ribosomal subunit protein uS17.